The sequence spans 496 residues: Lysine--tRNA ligase (496 aa).

Residues Glu408 and Glu415 each contribute to the Mg(2+) site.

Belongs to the class-II aminoacyl-tRNA synthetase family. As to quaternary structure, homodimer. The cofactor is Mg(2+).

It localises to the cytoplasm. It carries out the reaction tRNA(Lys) + L-lysine + ATP = L-lysyl-tRNA(Lys) + AMP + diphosphate. The sequence is that of Lysine--tRNA ligase from Legionella pneumophila (strain Corby).